A 149-amino-acid polypeptide reads, in one-letter code: uncharacterized protein (149 aa).

The 145-residue stretch at Leu-2–Arg-146 folds into the N-acetyltransferase domain.

The protein belongs to the acetyltransferase family.

This is an uncharacterized protein from Bacillus subtilis (strain 168).